The sequence spans 400 residues: Telomeric repeat-binding factor 2-interacting protein 1 (400 aa).

Ala2 bears the N-acetylalanine mark. Phosphoserine is present on residues Ser36 and Ser43. The 24-residue stretch at 78–101 folds into the BRCT domain; that stretch reads FISTQYILDCVERNERLELEAYRL. Residues 105-126 are disordered; that stretch reads SAADTGSEAKPGALAEGAAEPE. Positions 112-125 are enriched in low complexity; sequence EAKPGALAEGAAEP. Lys114 participates in a covalent cross-link: Glycyl lysine isopeptide (Lys-Gly) (interchain with G-Cter in SUMO2). Positions 128-188 constitute a Myb-like domain; sequence QRLAGRIAFT…SLKDRYLKHL (61 aa). Residues Ser154 and Ser156 each carry the phosphoserine modification. A Glycyl lysine isopeptide (Lys-Gly) (interchain with G-Cter in SUMO2) cross-link involves residue Lys194. 2 disordered regions span residues 196–244 and 264–311; these read LLGD…EEIQ and VVVD…SQPE. Residues Ser203 and Ser206 each carry the phosphoserine modification. Residues Lys208, Lys212, and Lys240 each participate in a glycyl lysine isopeptide (Lys-Gly) (interchain with G-Cter in SUMO2) cross-link. Acidic residues predominate over residues 280 to 305; it reads CDDDPPTPEEDSETQPDEEEEEEEEE. Lys373 participates in a covalent cross-link: Glycyl lysine isopeptide (Lys-Gly) (interchain with G-Cter in SUMO2). Positions 384–400 match the Nuclear localization signal motif; it reads KKFGAQNVARRIEFRKK.

Belongs to the RAP1 family. As to quaternary structure, associates with the I-kappa-B-kinase (IKK) core complex, composed of CHUK, IKBKB and IKBKG. Homodimer. Component of the shelterin complex (telosome) composed of TERF1, TERF2, TINF2, TERF2IP ACD and POT1. Interacts with TERF2 (but not TERF1) with its C-terminus. Interacts with SLX4/BTBD12. Interacts with TERF2; the interaction is direct.

The protein localises to the nucleus. The protein resides in the cytoplasm. It localises to the chromosome. It is found in the telomere. Its function is as follows. Acts both as a regulator of telomere function and as a transcription regulator. Involved in the regulation of telomere length and protection as a component of the shelterin complex (telosome). In contrast to other components of the shelterin complex, it is dispensible for telomere capping and does not participate in the protection of telomeres against non-homologous end-joining (NHEJ)-mediated repair. Instead, it is required to negatively regulate telomere recombination and is essential for repressing homology-directed repair (HDR), which can affect telomere length. Does not bind DNA directly: recruited to telomeric double-stranded 5'-TTAGGG-3' repeats via its interaction with TERF2. Independently of its function in telomeres, also acts as a transcription regulator: recruited to extratelomeric 5'-TTAGGG-3' sites via its association with TERF2 or other factors, and regulates gene expression. When cytoplasmic, associates with the I-kappa-B-kinase (IKK) complex and acts as a regulator of the NF-kappa-B signaling by promoting IKK-mediated phosphorylation of RELA/p65, leading to activate expression of NF-kappa-B target genes. This is Telomeric repeat-binding factor 2-interacting protein 1 (TERF2IP) from Macaca fascicularis (Crab-eating macaque).